The following is a 981-amino-acid chain: Transcription factor TAC1 (981 aa).

The span at 1–29 (MDTSSSSGTHPSTFNNLTKQQELTGNDPN) shows a compositional bias: polar residues. The interval 1–33 (MDTSSSSGTHPSTFNNLTKQQELTGNDPNDTNR) is disordered. Residues 40 to 68 (CDSCRRKKIKCNGSYPCGNCIQAKNTSNC) constitute a DNA-binding region (zn(2)-C6 fungal-type). 3 disordered regions span residues 74–106 (PVRK…TFSG), 165–199 (HSNS…TSHS), and 868–902 (LRDN…SNST). Residues 165 to 177 (HSNSSMFNNNSLS) show a composition bias toward low complexity. Residues 868–880 (LRDNSTNHGQNNM) show a composition bias toward polar residues. The segment covering 881-902 (NPSPTITNNTYNSNINTGSNST) has biased composition (low complexity).

Phosphorylated. Phosphorylation leads to hyperactivation.

The protein localises to the nucleus. Its activity is regulated as follows. Drugs such as farnesol and 1-dodecanol are able to hyperactivate TAC1 probably via phosphorylation by the Mediator complex. Functionally, transcriptional activator of drug-responsive genes including the ABC-type transporters CDR1 and CDR2, as well as HSP12 and RTA3. Binds the cis-acting regulatory drug-responsive elements (DREs) with the consensus sequence 5'-CGGAWATCGGATATTTTTTT-3' in the promoters of target genes. The chain is Transcription factor TAC1 from Candida albicans (strain SC5314 / ATCC MYA-2876) (Yeast).